We begin with the raw amino-acid sequence, 121 residues long: Basic phospholipase A2 homolog BaTX (121 aa).

Cystine bridges form between cysteine 26-cysteine 115, cysteine 28-cysteine 44, cysteine 43-cysteine 95, cysteine 49-cysteine 121, cysteine 50-cysteine 88, cysteine 57-cysteine 81, and cysteine 75-cysteine 86. The interval 105–117 (KKYRYYLKPLCKK) is important for membrane-damaging activities in eukaryotes and bacteria; heparin-binding.

Belongs to the phospholipase A2 family. Group II subfamily. K49 sub-subfamily. As to quaternary structure, homodimer; non-covalently linked. As to expression, expressed by the venom gland.

Its subcellular location is the secreted. Snake venom phospholipase A2 homolog that lacks enzymatic activity. Is myotoxic and displays edema-inducing activities. In vitro, produced time-dependent, irreversible neuromuscular blockade in isolated mouse phrenic nerve-diaphragm and chick biventer cervicis preparations. A model of myotoxic mechanism has been proposed: an apo Lys49-PLA2 is activated by the entrance of a hydrophobic molecule (e.g. fatty acid) at the hydrophobic channel of the protein leading to a reorientation of a monomer. This reorientation causes a transition between 'inactive' to 'active' states, causing alignment of C-terminal and membrane-docking sites (MDoS) side-by-side and putting the membrane-disruption sites (MDiS) in the same plane, exposed to solvent and in a symmetric position for both monomers. The MDoS region stabilizes the toxin on membrane by the interaction of charged residues with phospholipid head groups. Subsequently, the MDiS region destabilizes the membrane with penetration of hydrophobic residues. This insertion causes a disorganization of the membrane, allowing an uncontrolled influx of ions (i.e. calcium and sodium), and eventually triggering irreversible intracellular alterations and cell death. This chain is Basic phospholipase A2 homolog BaTX, found in Bothrops alternatus (Urutu).